The primary structure comprises 942 residues: MORC family CW-type zinc finger protein 3 (942 aa).

Residues lysine 191, lysine 205, lysine 280, and lysine 293 each participate in a glycyl lysine isopeptide (Lys-Gly) (interchain with G-Cter in SUMO2) cross-link. The segment at 326 to 353 (AYEKVGCQLKANNMGVGVVGIIECNFLK) is nuclear matrix binding. The segment at 404-454 (KRPDQTWVQCDACLKWRKLPDGIDQLPEKWYCSNNPDPQFRNCEVPEEPED) adopts a CW-type zinc-finger fold. Residues cysteine 413, cysteine 416, cysteine 435, and cysteine 446 each coordinate Zn(2+). Positions 503–594 (SFSPVKESVP…ENSTPKPAVD (92 aa)) are RNA binding. Serine 517 and serine 543 each carry phosphoserine. Lysine 558 is covalently cross-linked (Glycyl lysine isopeptide (Lys-Gly) (interchain with G-Cter in SUMO2)). The residue at position 563 (serine 563) is a Phosphoserine. A Glycyl lysine isopeptide (Lys-Gly) (interchain with G-Cter in SUMO1); alternate cross-link involves residue lysine 604. Residue lysine 604 forms a Glycyl lysine isopeptide (Lys-Gly) (interchain with G-Cter in SUMO2); alternate linkage. The segment at 623 to 654 (PKPCVQASSTSTSTSRSDPGITVSTQTDAPGL) is disordered. A compositionally biased stretch (low complexity) spans 630–639 (SSTSTSTSRS). Glycyl lysine isopeptide (Lys-Gly) (interchain with G-Cter in SUMO1); alternate cross-links involve residues lysine 657, lysine 658, and lysine 743. Glycyl lysine isopeptide (Lys-Gly) (interchain with G-Cter in SUMO2); alternate cross-links involve residues lysine 657, lysine 658, and lysine 743. Residues 696–874 (SHQLQELRSE…KSTGQQAAAD (179 aa)) adopt a coiled-coil conformation. Serine 768 is modified (phosphoserine). Lysine 797 is covalently cross-linked (Glycyl lysine isopeptide (Lys-Gly) (interchain with G-Cter in SUMO1); alternate). Lysine 797 participates in a covalent cross-link: Glycyl lysine isopeptide (Lys-Gly) (interchain with G-Cter in SUMO2); alternate.

In terms of assembly, homodimer. The sumoylated form interacts with PML (via SUMO-interacting motif). Interacts with TP53. Post-translationally, sumoylation is involved in interaction with PML and localization to PML nuclear bodies.

The protein localises to the nucleus. It localises to the nucleoplasm. It is found in the nucleus matrix. The protein resides in the PML body. Its subcellular location is the chromosome. Its activity is regulated as follows. Dimerization of the ATPase domain is strictly required for the catalytic activity and binding to double-stranded DNA. Disrupting the interface between ATPase and the CW domains releases autoinhibition since the CW domain sterically impedes binding of the ATPase domain to DNA. Nuclear matrix protein which forms MORC3-NBs (nuclear bodies) via an ATP-dependent mechanism and plays a role in innate immunity by restricting different viruses through modulation of the IFN response. Mechanistically, possesses a primary antiviral function through a MORC3-regulated element that activates IFNB1, and this function is guarded by a secondary IFN-repressing function. Sumoylated MORC3-NBs associates with PML-NBs and recruits TP53 and SP100, thus regulating TP53 activity. Binds RNA in vitro. Histone methylation reader which binds to non-methylated (H3K4me0), monomethylated (H3K4me1), dimethylated (H3K4me2) and trimethylated (H3K4me3) 'Lys-4' on histone H3. The order of binding preference is H3K4me3 &gt; H3K4me2 &gt; H3K4me1 &gt; H3K4me0. The polypeptide is MORC family CW-type zinc finger protein 3 (Mus musculus (Mouse)).